The chain runs to 270 residues: uncharacterized protein (270 aa).

The interval 166–186 is disordered; it reads RRKENNISNESVSEEPESPLF.

This is an uncharacterized protein from Ostreid herpesvirus 1 (isolate France) (OsHV-1).